The following is a 278-amino-acid chain: HTH-type transcriptional activator RhaS (278 aa).

Positions 174-272 constitute an HTH araC/xylS-type domain; the sequence is NLLLAWLEDH…NWSPRDIRQG (99 aa). 2 DNA-binding regions (H-T-H motif) span residues 191 to 212 and 239 to 262; these read DAVA…KQQT and VTDI…RREF.

As to quaternary structure, binds DNA as a dimer.

It is found in the cytoplasm. Functionally, activates expression of the rhaBAD and rhaT operons. The polypeptide is HTH-type transcriptional activator RhaS (Shigella boydii serotype 4 (strain Sb227)).